We begin with the raw amino-acid sequence, 196 residues long: Cysteine/O-acetylserine efflux protein (196 aa).

Residues 1–21 traverse the membrane as a helical segment; sequence MTPTLISAFLTYTLITALTPG. The Cytoplasmic portion of the chain corresponds to 22–41; it reads PNNILALSSVTSHGLRRSLR. Residues 42–62 traverse the membrane as a helical segment; the sequence is VLAGMSVGFIITMLICAALTF. The Periplasmic segment spans residues 63 to 70; the sequence is SLVELDSR. The helical transmembrane segment at 71-91 threads the bilayer; sequence FTLVLGWIGAAYILWLAWQIA. At 92–114 the chain is on the cytoplasmic side; the sequence is KSKPATGTPSVEPVGFWASLGLQ. The helical transmembrane segment at 115-135 threads the bilayer; sequence FVNVKIILYGITALSTFVLPV. Over 136 to 139 the chain is Periplasmic; the sequence is TREP. A helical membrane pass occupies residues 140–160; that stretch reads VWLISVSLLLAAIGALGNLCW. Residues 161–170 lie on the Cytoplasmic side of the membrane; the sequence is ALAGHLFQRL. Residues 171–191 traverse the membrane as a helical segment; the sequence is FLLYGRQLNWMLAALLVYCAV. Over 192–196 the chain is Periplasmic; the sequence is RIVVE.

The protein belongs to the Rht family.

The protein localises to the cell inner membrane. The enzyme catalyses O-acetyl-L-serine(in) = O-acetyl-L-serine(out). It catalyses the reaction L-cysteine(in) = L-cysteine(out). Exporter of O-acetylserine (OAS) and cysteine. This chain is Cysteine/O-acetylserine efflux protein (eamB), found in Klebsiella pneumoniae subsp. pneumoniae (strain ATCC 700721 / MGH 78578).